The chain runs to 430 residues: Trigger factor (430 aa).

Residues 165–250 (TDIAIFDFEG…LHQIKTKKIP (86 aa)) form the PPIase FKBP-type domain.

It belongs to the FKBP-type PPIase family. Tig subfamily.

It localises to the cytoplasm. The catalysed reaction is [protein]-peptidylproline (omega=180) = [protein]-peptidylproline (omega=0). Functionally, involved in protein export. Acts as a chaperone by maintaining the newly synthesized protein in an open conformation. Functions as a peptidyl-prolyl cis-trans isomerase. In Onion yellows phytoplasma (strain OY-M), this protein is Trigger factor.